The chain runs to 467 residues: Chromosomal replication initiator protein DnaA (467 aa).

Residues 1 to 90 (MSLSLWQQCL…KPVTQTPQAA (90 aa)) are domain I, interacts with DnaA modulators. A domain II region spans residues 91–130 (VTSNVAAPAQVAQTQPQRAAPSTRSGWDNVPAPAEPTYRS). Over residues 98–111 (PAQVAQTQPQRAAP) the composition is skewed to low complexity. The segment at 98–119 (PAQVAQTQPQRAAPSTRSGWDN) is disordered. The domain III, AAA+ region stretch occupies residues 131–347 (NVNVKHTFDN…GALNRVIANA (217 aa)). 4 residues coordinate ATP: Gly-175, Gly-177, Lys-178, and Thr-179. The domain IV, binds dsDNA stretch occupies residues 348-467 (NFTGRAITID…FSNLIRTLSS (120 aa)).

This sequence belongs to the DnaA family. In terms of assembly, oligomerizes as a right-handed, spiral filament on DNA at oriC.

It localises to the cytoplasm. Its function is as follows. Plays an essential role in the initiation and regulation of chromosomal replication. ATP-DnaA binds to the origin of replication (oriC) to initiate formation of the DNA replication initiation complex once per cell cycle. Binds the DnaA box (a 9 base pair repeat at the origin) and separates the double-stranded (ds)DNA. Forms a right-handed helical filament on oriC DNA; dsDNA binds to the exterior of the filament while single-stranded (ss)DNA is stabiized in the filament's interior. The ATP-DnaA-oriC complex binds and stabilizes one strand of the AT-rich DNA unwinding element (DUE), permitting loading of DNA polymerase. After initiation quickly degrades to an ADP-DnaA complex that is not apt for DNA replication. Binds acidic phospholipids. The sequence is that of Chromosomal replication initiator protein DnaA from Shigella boydii serotype 4 (strain Sb227).